Reading from the N-terminus, the 341-residue chain is L-threonine 3-dehydrogenase (341 aa).

Cysteine 38 contacts Zn(2+). Active-site charge relay system residues include threonine 40 and histidine 43. The Zn(2+) site is built by histidine 63, glutamate 64, cysteine 93, cysteine 96, cysteine 99, and cysteine 107. Residues isoleucine 175, aspartate 195, arginine 200, 262–264 (LGI), and 286–287 (IY) each bind NAD(+).

Belongs to the zinc-containing alcohol dehydrogenase family. In terms of assembly, homotetramer. It depends on Zn(2+) as a cofactor.

It is found in the cytoplasm. It carries out the reaction L-threonine + NAD(+) = (2S)-2-amino-3-oxobutanoate + NADH + H(+). It functions in the pathway amino-acid degradation; L-threonine degradation via oxydo-reductase pathway; glycine from L-threonine: step 1/2. Functionally, catalyzes the NAD(+)-dependent oxidation of L-threonine to 2-amino-3-ketobutyrate. The sequence is that of L-threonine 3-dehydrogenase from Shewanella pealeana (strain ATCC 700345 / ANG-SQ1).